A 171-amino-acid polypeptide reads, in one-letter code: Ponticulin-like protein F (171 aa).

The signal sequence occupies residues 1-20; it reads MKFIPALIIFVFTIFALTNS. Residue Gly149 is the site of GPI-like-anchor amidated glycine attachment. Positions 150–171 are cleaved as a propeptide — removed in mature form; the sequence is TSSTIVIPFALILSLLLSVITL.

Belongs to the ponticulin family. In terms of processing, the GPI-like-anchor contains a phosphoceramide group, rather than a phosphatidyl group.

It localises to the cell membrane. The protein is Ponticulin-like protein F (ponF) of Dictyostelium discoideum (Social amoeba).